The sequence spans 575 residues: MTSKKLVNSVAGCADDALAGLVACNPNLQLLQGHRVALRSDLDSLKGRVALLSGGGSGHEPAHAGFIGKGMLTGVIAGAVFTSPAVGSILAAIRAVAQAGTVGTLLIVKNYTGDRLNFGLAREQARAEGIPVEMVVIGDDSAFTVLKKAGRRGLCGTVLIHKVAGALAEAGVGLEEIAKQVNVVAKAMGTLGVSLSSCSVPGSKPTFELSADEVELGLGIHGEAGVRRIKMATADEIVKLMLDHMTNTTNASHVPVQPGSSVVMMVNNLGGLSFLELGIIADATVRSLEGRGVKIARALVGTFMSALEMPGISLTLLLVDEPLLKLIDAETTAAAWPNVAAVSITGRKRSRVAPAEPQEAPDSTAAGGSASKRMALVLERVCSTLLGLEEHLNALDRAAGDGDCGTTHSRAARAIQEWLKEGPPPASPAQLLSKLSVLLLEKMGGSSGALYGLFLTAAAQPLKAKTSLPAWSAAMDAGLEAMQKYGKAAPGDRTMLDSLWAAGQELQAWKSPGADLLQVLTKAVKSAEAAAEATKNMEAGAGRASYISSARLEQPDPGAVAAAAILRAILEVLQS.

The 328-residue stretch at Ser9–Trp336 folds into the DhaK domain. Dihydroxyacetone-binding positions include Gly56–His59, Lys109, and Asp114. The Tele-hemiaminal-histidine intermediate role is filled by His221. The interval Lys348–Gly367 is disordered. The residue at position 350 (Ser350) is a Phosphoserine. One can recognise a DhaL domain in the interval Lys372–Glu571. Residues Asp401–Cys404, Ser446–Ser447, Gly486, and Thr494–Met495 contribute to the ATP site. Residues Ser511 and Ser545 each carry the phosphoserine modification. Position 556 to 558 (Asp556 to Gly558) interacts with ATP.

The protein belongs to the dihydroxyacetone kinase (DAK) family. As to quaternary structure, homodimer. Interacts with IFIH1 (via the CARD domains), the interaction is inhibited by viral infection. Mg(2+) is required as a cofactor. The cofactor is Mn(2+). Co(2+) serves as cofactor. In terms of tissue distribution, detected in erythrocytes (at protein level).

It catalyses the reaction dihydroxyacetone + ATP = dihydroxyacetone phosphate + ADP + H(+). It carries out the reaction D-glyceraldehyde + ATP = D-glyceraldehyde 3-phosphate + ADP + H(+). The catalysed reaction is FAD = riboflavin cyclic-4',5'-phosphate + AMP + H(+). Each activity is inhibited by the substrate(s) of the other. In terms of biological role, catalyzes both the phosphorylation of dihydroxyacetone and of glyceraldehyde, and the splitting of ribonucleoside diphosphate-X compounds among which FAD is the best substrate. Represses IFIH1-mediated cellular antiviral response. The polypeptide is Triokinase/FMN cyclase (Homo sapiens (Human)).